Here is a 353-residue protein sequence, read N- to C-terminus: MEDGVLKEGFLVKRGHIVHNWKARWFILRQNTLVYYKLEGGRRVTPPKGRILLDGCTITCPCLEYENRPLLIKLKTQTSTEYFLEACSREERDAWAFEITGAIHAGQPGKVQQLHSLRNSFKLPPHISLHRIVDKMHDSNTGIRSSPNMEQGSTYKKTFLGSSLVDWLISNSFTASRLEAVTLASMLMEENFLRPVGVRSMGAIRSGDLAEQFLDDSTALYTFAESYKKKISPKEEISLSTVELSGTVVKQGYLAKQGHKRKNWKVRRFVLRKDPAFLHYYDPSKEENRPVGGFSLRGSLVSALEDNGVPTGVKGNVQGNLFKVITKDDTHYYIQASSKAERAEWIEAIKKLT.

N-acetylmethionine is present on M1. One can recognise a PH 1 domain in the interval 4-104 (GVLKEGFLVK…WAFEITGAIH (101 aa)). S120 bears the Phosphoserine mark. The DEP domain maps to 139–225 (SNTGIRSSPN…DSTALYTFAE (87 aa)). Positions 247–353 (TVVKQGYLAK…EWIEAIKKLT (107 aa)) constitute a PH 2 domain.

It is found in the cell projection. The protein resides in the lamellipodium membrane. Its subcellular location is the cytoplasm. The protein localises to the cytoskeleton. In terms of biological role, may help orchestrate cytoskeletal arrangement. Contribute to lamellipodia formation. The sequence is that of Pleckstrin-2 (PLEK2) from Homo sapiens (Human).